We begin with the raw amino-acid sequence, 180 residues long: NADH-quinone oxidoreductase subunit I (180 aa).

4Fe-4S ferredoxin-type domains lie at 50 to 80 and 90 to 119; these read LTRDPDGEERCVACNLCAVACPVGCISLQKT and EFFRINFSRCIFCGLCEEACPTTAIQLTPD. [4Fe-4S] cluster is bound by residues cysteine 60, cysteine 63, cysteine 66, cysteine 70, cysteine 99, cysteine 102, cysteine 105, and cysteine 109.

It belongs to the complex I 23 kDa subunit family. NDH-1 is composed of 13 different subunits. Subunits NuoA, H, J, K, L, M, N constitute the membrane sector of the complex. Requires [4Fe-4S] cluster as cofactor.

It is found in the cell inner membrane. It carries out the reaction a quinone + NADH + 5 H(+)(in) = a quinol + NAD(+) + 4 H(+)(out). In terms of biological role, NDH-1 shuttles electrons from NADH, via FMN and iron-sulfur (Fe-S) centers, to quinones in the respiratory chain. The immediate electron acceptor for the enzyme in this species is believed to be ubiquinone. Couples the redox reaction to proton translocation (for every two electrons transferred, four hydrogen ions are translocated across the cytoplasmic membrane), and thus conserves the redox energy in a proton gradient. The chain is NADH-quinone oxidoreductase subunit I from Shigella dysenteriae serotype 1 (strain Sd197).